The sequence spans 472 residues: Major capsid protein (472 aa).

This sequence belongs to the NCLDV major capsid protein family. In terms of assembly, homotrimer. In terms of processing, the N-terminus is blocked.

It localises to the virion. In terms of biological role, major capsid protein that self assembles to form an icosahedral capsid. Represents around 50% of the total virion protein mass. The sequence is that of Major capsid protein (MCP) from Simulium (IIV-22).